A 414-amino-acid chain; its full sequence is Isocitrate dehydrogenase [NADP] cytoplasmic (414 aa).

Residue serine 2 is modified to N-acetylserine. The residue at position 42 (tyrosine 42) is a Phosphotyrosine. 75-77 (TIT) contributes to the NADP(+) binding site. Threonine 77 lines the substrate pocket. N6-acetyllysine is present on lysine 81. Arginine 82 is a binding site for NADP(+). Residues 94-100 (SPNGTIR) and arginine 109 each bind substrate. Lysine 126 bears the N6-succinyllysine mark. Substrate contacts are provided by arginine 132 and lysine 212. An N6-acetyllysine mark is found at lysine 224, lysine 233, and lysine 243. Aspartate 252 serves as a coordination point for Mn(2+). Lysine 260 lines the NADP(+) pocket. Mn(2+)-binding residues include aspartate 275 and aspartate 279. 310–315 (GTVTRH) provides a ligand contact to NADP(+). At lysine 321 the chain carries N6-acetyllysine. NADP(+) is bound at residue asparagine 328. Phosphoserine is present on serine 389. Lysine 400 bears the N6-succinyllysine mark.

Belongs to the isocitrate and isopropylmalate dehydrogenases family. Homodimer. It depends on Mg(2+) as a cofactor. Requires Mn(2+) as cofactor. Post-translationally, acetylation at Lys-374 dramatically reduces catalytic activity.

The protein localises to the cytoplasm. It is found in the cytosol. It localises to the peroxisome. The catalysed reaction is D-threo-isocitrate + NADP(+) = 2-oxoglutarate + CO2 + NADPH. Functionally, catalyzes the NADP(+)-dependent oxidative decarboxylation of isocitrate (D-threo-isocitrate) to 2-ketoglutarate (2-oxoglutarate), which is required by other enzymes such as the phytanoyl-CoA dioxygenase. Plays a critical role in the generation of NADPH, an important cofactor in many biosynthesis pathways. May act as a corneal epithelial crystallin and may be involved in maintaining corneal epithelial transparency. The sequence is that of Isocitrate dehydrogenase [NADP] cytoplasmic (IDH1) from Homo sapiens (Human).